Here is a 149-residue protein sequence, read N- to C-terminus: Protein E6 (149 aa).

Zinc fingers lie at residues 30 to 66 (CVEC…CKVC) and 103 to 139 (CIIC…CAVC). The PDZ-binding domain signature appears at 147–149 (TQV).

Belongs to the papillomaviridae E6 protein family. In terms of assembly, forms homodimers. Interacts with ubiquitin-protein ligase UBE3A/E6-AP and thus forms a complex with human TP53. Interacts with human NFX1 and MAGI3. Interacts with human IRF3; this interaction inhibits the establishment of antiviral state. Interacts with human TYK2; this interaction inhibits JAK-STAT activation by interferon alpha. Interacts with host DLG1; this interaction leads to the proteasomal degradation of DLG1.

The protein localises to the host cytoplasm. The protein resides in the host nucleus. Plays a major role in the induction and maintenance of cellular transformation. Acts mainly as an oncoprotein by stimulating the destruction of many host cell key regulatory proteins. E6 associates with host UBE3A/E6-AP ubiquitin-protein ligase, and inactivates tumor suppressors TP53 and TP73 by targeting them to the 26S proteasome for degradation. In turn, DNA damage and chromosomal instabilities increase and lead to cell proliferation and cancer development. The complex E6/E6AP targets several other substrates to degradation via the proteasome including host DLG1 or NFX1, a repressor of human telomerase reverse transcriptase (hTERT). The resulting increased expression of hTERT prevents the shortening of telomere length leading to cell immortalization. Other cellular targets including BAK1, Fas-associated death domain-containing protein (FADD) and procaspase 8, are degraded by E6/E6AP causing inhibition of apoptosis. E6 also inhibits immune response by interacting with host IRF3 and TYK2. These interactions prevent IRF3 transcriptional activities and inhibit TYK2-mediated JAK-STAT activation by interferon alpha resulting in inhibition of the interferon signaling pathway. The protein is Protein E6 of Human papillomavirus 58.